Here is a 383-residue protein sequence, read N- to C-terminus: MTKRRVVVGMSGGVDSSVTAWLLKEQGYDVVGLFMKNWEDDDDGEYCSTRQDWIDVVSVADLIGIDVEAVNFAAEYKDRVFAEFLREYSAGRTPNPDVLCNAEIKFKAFLDHAMSLGAQTIATGHYARVRERDGRFELLKAFDHTKDQSYFLHRLNQAQLSKTMFPLGEIPKTRVREIAAQIGLPNAKKKDSTGICFIGERPFRDFLNRYLPTKPGPMKTPDGKTVGEHIGLAFYTFGQRKGIGLGGSKDGSGEPWFVAVKDIASNTLYVVQGHDHPWLRSRELVAGNVSWVAGEPPADGARCGAKTRYRQADAPCAFGRAAQAGDERFSLVFDEPQWAVTPGQSAVLYDGDVCLGGGIIESAATGRAGTAPAGRAPALVEAR.

ATP contacts are provided by residues 9–16 (GMSGGVDS) and Met35. An interaction with target base in tRNA region spans residues 95–97 (NPD). Cys100 serves as the catalytic Nucleophile. Cys100 and Cys196 are joined by a disulfide. Gly124 is an ATP binding site. The interval 146-148 (KDQ) is interaction with tRNA. Cys196 serves as the catalytic Cysteine persulfide intermediate. Positions 308 to 309 (RY) are interaction with tRNA.

This sequence belongs to the MnmA/TRMU family.

The protein localises to the cytoplasm. The enzyme catalyses S-sulfanyl-L-cysteinyl-[protein] + uridine(34) in tRNA + AH2 + ATP = 2-thiouridine(34) in tRNA + L-cysteinyl-[protein] + A + AMP + diphosphate + H(+). Its function is as follows. Catalyzes the 2-thiolation of uridine at the wobble position (U34) of tRNA, leading to the formation of s(2)U34. The chain is tRNA-specific 2-thiouridylase MnmA from Burkholderia mallei (strain NCTC 10247).